Here is a 457-residue protein sequence, read N- to C-terminus: Serine--tRNA ligase (457 aa).

An L-serine-binding site is contributed by 252–254; sequence TAE. ATP contacts are provided by residues 283–285 and valine 299; that span reads RKE. Glutamate 306 contacts L-serine. Position 370 to 373 (370 to 373) interacts with ATP; the sequence is EMVS. Threonine 406 contributes to the L-serine binding site.

This sequence belongs to the class-II aminoacyl-tRNA synthetase family. Type-1 seryl-tRNA synthetase subfamily. In terms of assembly, homodimer. The tRNA molecule binds across the dimer.

The protein localises to the cytoplasm. The catalysed reaction is tRNA(Ser) + L-serine + ATP = L-seryl-tRNA(Ser) + AMP + diphosphate + H(+). It carries out the reaction tRNA(Sec) + L-serine + ATP = L-seryl-tRNA(Sec) + AMP + diphosphate + H(+). It participates in aminoacyl-tRNA biosynthesis; selenocysteinyl-tRNA(Sec) biosynthesis; L-seryl-tRNA(Sec) from L-serine and tRNA(Sec): step 1/1. Catalyzes the attachment of serine to tRNA(Ser). Is also able to aminoacylate tRNA(Sec) with serine, to form the misacylated tRNA L-seryl-tRNA(Sec), which will be further converted into selenocysteinyl-tRNA(Sec). This Saccharolobus solfataricus (strain ATCC 35092 / DSM 1617 / JCM 11322 / P2) (Sulfolobus solfataricus) protein is Serine--tRNA ligase.